The chain runs to 154 residues: General odorant-binding protein 83a (154 aa).

Residues 1–33 (MALNGFGRRVSASVLLIALSLLSGALILPPAAA) form the signal peptide. Cystine bridges form between Cys55–Cys86, Cys82–Cys133, and Cys124–Cys142.

Belongs to the PBP/GOBP family. As to expression, in the ventrolateral region of the antenna, expressed in two distinct types of olfactory hairs: in most sensilla trichodea and in a subset of the small sensilla basiconica (at protein level).

The protein localises to the secreted. The protein is General odorant-binding protein 83a (Obp83a) of Drosophila melanogaster (Fruit fly).